Consider the following 102-residue polypeptide: Protamine-2 (102 aa).

Phosphoserine occurs at positions 8, 10, and 37. 2 disordered regions span residues 15 to 41 (EVYG…PEQV) and 66 to 102 (IHRQ…CRRH).

The protein belongs to the protamine P2 family. In terms of assembly, interacts with TDRP. Proteolytic processing into mature chains is required for histone eviction during spermatogenesis. Transition proteins (TNP1 and TNP2) are required for processing. Testis.

It is found in the nucleus. The protein localises to the chromosome. Functionally, protamines substitute for histones in the chromatin of sperm during the haploid phase of spermatogenesis. They compact sperm DNA into a highly condensed, stable and inactive complex. The polypeptide is Protamine-2 (PRM2) (Pongo pygmaeus (Bornean orangutan)).